The sequence spans 106 residues: Large ribosomal subunit protein bL21 (106 aa).

This sequence belongs to the bacterial ribosomal protein bL21 family. As to quaternary structure, part of the 50S ribosomal subunit. Contacts protein L20.

Functionally, this protein binds to 23S rRNA in the presence of protein L20. This chain is Large ribosomal subunit protein bL21, found in Xanthomonas euvesicatoria pv. vesicatoria (strain 85-10) (Xanthomonas campestris pv. vesicatoria).